A 383-amino-acid polypeptide reads, in one-letter code: MTTLKTSSFSSLPWDLVEDILARVPATSLKRLRSTCKQWNFLFNDQIFTKMHFDKAEKQFLVLILRLYTVCSMSLDLRGLHDNIDPSIEVKGELSLIDPHCSSRKTFVSKVFHCNGLLLCTTMTGLVVWNPCTDQTRWIKTEVPHNRNDKYALGYGNYKSCYNYKIMKFLDLESFDLEIYEVNSNSWRVLGTVTPDFTIPLDAEGVSLRGNSYWIASHKREEIEEEEEEENEYFINDFLISFDFTTERFGPRVSLPFKCESSWDTISLSCVREERLSLFFQDDGTLKMEIWMTNNITETKTTTMSWSPFLKIDLYTYGHRFGNEVSFLVDEENKVIVCCDEEEDDINDTVYIIGENEYWRKEDIVQRSYRPRMFSYVPSLVQI.

Residues 6–51 (TSSFSSLPWDLVEDILARVPATSLKRLRSTCKQWNFLFNDQIFTKM) enclose the F-box domain. Kelch repeat units follow at residues 110–158 (KVFH…YGNY), 160–211 (SCYN…LRGN), and 349–383 (TVYIIGENEYWRKEDIVQRSYRPRMFSYVPSLVQI).

In Arabidopsis thaliana (Mouse-ear cress), this protein is Putative F-box/kelch-repeat protein At1g62270.